Consider the following 6995-residue polypeptide: Fibrous sheath-interacting protein 2 (6995 aa).

Disordered regions lie at residues 273–292 (EQKI…RKKQ), 308–336 (DTGL…SSKK), and 351–476 (GDQK…TDAP). Residues 359 to 396 (TSGQVSATVNQSQSSSKDVTKVSASSVTYPAEVQNSSS) are compositionally biased toward polar residues. Basic and acidic residues predominate over residues 397–421 (EQKRSEVTKRLSDERGKNSTDDSAR). Positions 424–442 (IISTQLSPTRNAKLSQISL) are enriched in polar residues. Ser430 is modified (phosphoserine). Residues 443 to 452 (DHQKEEKEMK) show a composition bias toward basic and acidic residues. Polar residues predominate over residues 453 to 463 (STWNGGLSKKS). The stretch at 665-692 (LEISLLYDKKAKAMDQIKNLKNVFVNFK) forms a coiled coil. Disordered regions lie at residues 1452-1472 (PDPQ…DPPT), 2554-2595 (KSKR…VPQM), 2699-2731 (TKTK…TPQV), 3182-3270 (PVKM…PNFT), 5489-5665 (GPSA…KYKG), 5719-5740 (SKSS…MTEK), 5823-5878 (KDLS…SKSK), 5943-5996 (KEDE…PDKL), and 6973-6995 (SKVF…QDKR). The span at 2555–2565 (SKREGEMHDSS) shows a compositional bias: basic and acidic residues. A compositionally biased stretch (polar residues) spans 3187–3204 (PSNTSDTPRTRRSSQGSV). A compositionally biased stretch (low complexity) spans 3220–3231 (SVTSNSSSHISS). Positions 3232 to 3250 (CVENTNKSLEPMGRSNSEA) are enriched in polar residues. Over residues 3255–3265 (SRHKAHDHGQR) the composition is skewed to basic residues. A compositionally biased stretch (basic and acidic residues) spans 5496–5509 (DAKKEDESKVKPAT). 3 stretches are compositionally biased toward polar residues: residues 5523–5557 (MKSQ…SPPT), 5565–5625 (QVQQ…QSAM), and 5638–5650 (VQES…TTMK). Basic and acidic residues-rich tracts occupy residues 5719 to 5738 (SKSS…ETMT) and 5829 to 5877 (GHRD…ESKS). Over residues 5982–5993 (SDVQKTPEQSSP) the composition is skewed to polar residues. Residues 6977–6995 (SRSSGSIPKSSSPPHQDKR) are compositionally biased toward low complexity.

In terms of assembly, may interact with AKAP4. As to expression, predominantly expressed in testis.

Its function is as follows. Plays a role in spermatogenesis. This is Fibrous sheath-interacting protein 2 (Fsip2) from Mus musculus (Mouse).